The primary structure comprises 188 residues: Elongation factor P-like protein (188 aa).

The protein belongs to the elongation factor P family.

This Vibrio cholerae serotype O1 (strain ATCC 39541 / Classical Ogawa 395 / O395) protein is Elongation factor P-like protein.